The chain runs to 306 residues: Ribonuclease Z (306 aa).

The Zn(2+) site is built by histidine 63, histidine 65, aspartate 67, histidine 68, histidine 140, aspartate 211, and histidine 269. The Proton acceptor role is filled by aspartate 67.

This sequence belongs to the RNase Z family. In terms of assembly, homodimer. It depends on Zn(2+) as a cofactor.

The enzyme catalyses Endonucleolytic cleavage of RNA, removing extra 3' nucleotides from tRNA precursor, generating 3' termini of tRNAs. A 3'-hydroxy group is left at the tRNA terminus and a 5'-phosphoryl group is left at the trailer molecule.. Functionally, zinc phosphodiesterase, which displays some tRNA 3'-processing endonuclease activity. Probably involved in tRNA maturation, by removing a 3'-trailer from precursor tRNA. The protein is Ribonuclease Z of Listeria innocua serovar 6a (strain ATCC BAA-680 / CLIP 11262).